Here is a 175-residue protein sequence, read N- to C-terminus: ATP synthase subunit delta (175 aa).

The protein belongs to the ATPase delta chain family. In terms of assembly, F-type ATPases have 2 components, F(1) - the catalytic core - and F(0) - the membrane proton channel. F(1) has five subunits: alpha(3), beta(3), gamma(1), delta(1), epsilon(1). F(0) has three main subunits: a(1), b(2) and c(10-14). The alpha and beta chains form an alternating ring which encloses part of the gamma chain. F(1) is attached to F(0) by a central stalk formed by the gamma and epsilon chains, while a peripheral stalk is formed by the delta and b chains.

It is found in the cell inner membrane. Its function is as follows. F(1)F(0) ATP synthase produces ATP from ADP in the presence of a proton or sodium gradient. F-type ATPases consist of two structural domains, F(1) containing the extramembraneous catalytic core and F(0) containing the membrane proton channel, linked together by a central stalk and a peripheral stalk. During catalysis, ATP synthesis in the catalytic domain of F(1) is coupled via a rotary mechanism of the central stalk subunits to proton translocation. Functionally, this protein is part of the stalk that links CF(0) to CF(1). It either transmits conformational changes from CF(0) to CF(1) or is implicated in proton conduction. The protein is ATP synthase subunit delta of Xanthomonas campestris pv. campestris (strain 8004).